The primary structure comprises 591 residues: Fanconi anemia group C protein homolog (591 aa).

As to quaternary structure, belongs to the multisubunit FA complex composed of FANCA, FANCB, FANCC, FANCE, FANCF, FANCG, FANCL/PHF9 and FANCM. This complex may also include HSP70. Interacts with ZBTB32. Upon IFNG induction, interacts with STAT1. Interacts with CDK1. Interacts with EIF2AK2. As to expression, ubiquitous.

The protein localises to the nucleus. Its subcellular location is the cytoplasm. In terms of biological role, DNA repair protein that may operate in a postreplication repair or a cell cycle checkpoint function. May be implicated in interstrand DNA cross-link repair and in the maintenance of normal chromosome stability. Upon IFNG induction, may facilitate STAT1 activation by recruiting STAT1 to IFNGR1. The sequence is that of Fanconi anemia group C protein homolog (Fancc) from Mus musculus (Mouse).